An 89-amino-acid chain; its full sequence is Small ribosomal subunit protein uS15 (89 aa).

The span at 1-21 shows a compositional bias: basic and acidic residues; that stretch reads MSLHQERKSELVSKFRTHESD. The interval 1–25 is disordered; the sequence is MSLHQERKSELVSKFRTHESDTGSP.

The protein belongs to the universal ribosomal protein uS15 family. Part of the 30S ribosomal subunit. Forms a bridge to the 50S subunit in the 70S ribosome, contacting the 23S rRNA.

Its function is as follows. One of the primary rRNA binding proteins, it binds directly to 16S rRNA where it helps nucleate assembly of the platform of the 30S subunit by binding and bridging several RNA helices of the 16S rRNA. Functionally, forms an intersubunit bridge (bridge B4) with the 23S rRNA of the 50S subunit in the ribosome. This chain is Small ribosomal subunit protein uS15, found in Myxococcus xanthus (strain DK1622).